Here is a 276-residue protein sequence, read N- to C-terminus: Urease accessory protein UreD (276 aa).

The protein belongs to the UreD family. In terms of assembly, ureD, UreF and UreG form a complex that acts as a GTP-hydrolysis-dependent molecular chaperone, activating the urease apoprotein by helping to assemble the nickel containing metallocenter of UreC. The UreE protein probably delivers the nickel.

It is found in the cytoplasm. Functionally, required for maturation of urease via the functional incorporation of the urease nickel metallocenter. The chain is Urease accessory protein UreD from Variovorax paradoxus (strain S110).